Reading from the N-terminus, the 377-residue chain is Presenilin-associated rhomboid-like protein, mitochondrial (377 aa).

The transit peptide at 1–52 (MAWRGWAQRGWGCGQAWTLPVCGGSYEELTAALAPSRLLRRRFNFFIQQKCG) directs the protein to the mitochondrion. The Mitochondrial matrix segment spans residues 53-99 (FRKAPRKVEPRRSDTSSEAYKRSALIPPVEETAFYPSPYPIRTLVKP). 2 positions are modified to phosphoserine: S65 and S68. Residues 100 to 119 (LFFTVGFTGCAFGSAAIWQY) traverse the membrane as a helical segment. Over 120 to 165 (ESLKSKVQSYFDGIKADWLDSIRPQKEGDFRKEINKWWNNLSDGQR) the chain is Mitochondrial intermembrane. A helical membrane pass occupies residues 166 to 185 (TVTGIIAANVFVFCLWRVPS). The Mitochondrial matrix portion of the chain corresponds to 186–205 (LQRTMIRYFTSNPASKVLCS). The chain crosses the membrane as a helical span at residues 206-228 (PMLLSTFSHFSLFHMAANMYVLW). Over 229-242 (SFSSSIVNILGQEQ) the chain is Mitochondrial intermembrane. The chain crosses the membrane as a helical span at residues 243-260 (FMAVYLSAGVISTFVSYV). At 261–270 (CKVATGRYGP) the chain is on the mitochondrial matrix side. The helical transmembrane segment at 271–287 (SLGASGAIMTVLAAVCT) threads the bilayer. Residue S275 is the Nucleophile of the active site. The Mitochondrial intermembrane segment spans residues 288-293 (KIPEGR). The helical transmembrane segment at 294-316 (LAIIFLPMFTFTAGNALKAIIAM) threads the bilayer. Residues 317-330 (DTAGMILGWKFFDH) are Mitochondrial matrix-facing. Residues 331–352 (AAHLGGALFGIWYITYGHELIW) traverse the membrane as a helical segment. H333 is a catalytic residue. At 353 to 377 (KNREPLVKIWHEMRTNSPKKGGGSK) the chain is on the mitochondrial intermembrane side.

This sequence belongs to the peptidase S54 family. Interacts with PSEN1 and PSEN2. Binds OPA1. Post-translationally, P-beta is proteolytically processed (beta-cleavage) in a PARL-dependent manner.

It localises to the mitochondrion inner membrane. The protein resides in the nucleus. It carries out the reaction Cleaves type-1 transmembrane domains using a catalytic dyad composed of serine and histidine that are contributed by different transmembrane domains.. In terms of biological role, required for the control of apoptosis during postnatal growth. Essential for proteolytic processing of an antiapoptotic form of OPA1 which prevents the release of mitochondrial cytochrome c in response to intrinsic apoptotic signals. Required for the maturation of PINK1 into its 52kDa mature form after its cleavage by mitochondrial-processing peptidase (MPP). Promotes cleavage of serine/threonine-protein phosphatase PGAM5 in damaged mitochondria in response to loss of mitochondrial membrane potential. Mediates differential cleavage of PINK1 and PGAM5 depending on the health status of mitochondria, disassociating from PINK1 and associating with PGAM5 in response to mitochondrial membrane potential loss. Required for processing of CLPB into a form with higher protein disaggregase activity by removing an autoinhibitory N-terminal peptide. Promotes processing of DIABLO/SMAC in the mitochondrion which is required for DIABLO apoptotic activity. Also required for cleavage of STARD7 and TTC19. Promotes changes in mitochondria morphology regulated by phosphorylation of P-beta domain. The sequence is that of Presenilin-associated rhomboid-like protein, mitochondrial (PARL) from Bos taurus (Bovine).